The sequence spans 308 residues: MGKTSKVKKTKAGSSTGNVQSLPFNTDKGQHILKNPGVVNAIVEKSALKATDTVLEVGPGTGNLTVKMLEVAKTVIACEIDPRMIAEVKKRVMGTPLQNKLQVNGGDVMKMEWPFFDVCVANLPYQISSPFVQKLLLHRPLPRYAVLMFQKEFADRLVARPGDKDYSRLSVNVQLLAKVEMLMKVKRTEFRPPPKVDSAVVRIAPKNPPPPVNFVEWEGLLRLCFMRKNKTLMAIFRLSNVIEVIEDNFRKVCSFKNKPIPKDLNMKKVIEETLTASGYGESRARKMRVEDFLALLLAFNKADIHFLS.

A compositionally biased stretch (basic residues) spans Met-1 to Lys-11. The segment at Met-1–Phe-24 is disordered. The segment covering Ala-12–Phe-24 has biased composition (polar residues). S-adenosyl-L-methionine contacts are provided by His-31, Leu-33, Gly-58, Glu-79, Asp-107, and Asn-122.

This sequence belongs to the class I-like SAM-binding methyltransferase superfamily. rRNA adenine N(6)-methyltransferase family. As to quaternary structure, part of the small subunit (SSU) processome, composed of more than 70 proteins and the RNA chaperone small nucleolar RNA (snoRNA) U3.

Its subcellular location is the nucleus. The protein localises to the nucleolus. It catalyses the reaction adenosine(1779)/adenosine(1780) in 18S rRNA + 4 S-adenosyl-L-methionine = N(6)-dimethyladenosine(1779)/N(6)-dimethyladenosine(1780) in 18S rRNA + 4 S-adenosyl-L-homocysteine + 4 H(+). Specifically dimethylates two adjacent adenosines in the loop of a conserved hairpin near the 3'-end of 18S rRNA in the 40S particle. Involved in the pre-rRNA processing steps leading to small-subunit rRNA production independently of its RNA-modifying catalytic activity. Part of the small subunit (SSU) processome, first precursor of the small eukaryotic ribosomal subunit. During the assembly of the SSU processome in the nucleolus, many ribosome biogenesis factors, an RNA chaperone and ribosomal proteins associate with the nascent pre-rRNA and work in concert to generate RNA folding, modifications, rearrangements and cleavage as well as targeted degradation of pre-ribosomal RNA by the RNA exosome. The protein is Probable dimethyladenosine transferase of Caenorhabditis elegans.